The following is a 389-amino-acid chain: Protein WALLS ARE THIN 1 (389 aa).

Helical transmembrane passes span 18–38 (LQLH…HVVS), 49–69 (LVFP…FAYF), 76–96 (PAIT…GITA), 111–131 (TFAS…AALL), 143–163 (GISK…ITLY), 198–218 (WTLG…WLVF), 230–250 (LSVT…IAAF), 266–286 (LFTI…VQIW), 294–314 (VFVA…ASIA), and 319–339 (FYLG…FVLY). EamA domains are found at residues 32–161 (AGFH…SVIT) and 210–339 (LSWS…FVLY). Phosphoserine is present on serine 372.

This sequence belongs to the drug/metabolite transporter (DMT) superfamily. Plant drug/metabolite exporter (P-DME) (TC 2.A.7.4) family. In terms of tissue distribution, mostly expressed in stems and hypocotyls, also present in seedlings, root, leaves, flowers and siliques. Ubiquitous, mostly expressed in vascular tissues and secondary wall-forming cells, including developing xylem vessels and fibers.

It localises to the vacuole membrane. Its function is as follows. Required for secondary wall formation in fibers, especially in short days conditions. Promotes indole metabolism and transport (e.g. tryptophan, neoglucobrassicin and auxin (indole-3-acetic acid)). May prevent salicylic-acid (SA) accumulation. This chain is Protein WALLS ARE THIN 1 (WAT1), found in Arabidopsis thaliana (Mouse-ear cress).